The following is a 438-amino-acid chain: Serine--tRNA ligase (438 aa).

L-serine is bound at residue 235–237 (TAE). Residues 266 to 268 (RKE) and Val282 each bind ATP. Glu289 contributes to the L-serine binding site. 355–358 (ELVS) is a binding site for ATP. Residue Thr393 coordinates L-serine.

Belongs to the class-II aminoacyl-tRNA synthetase family. Type-1 seryl-tRNA synthetase subfamily. As to quaternary structure, homodimer. The tRNA molecule binds across the dimer.

The enzyme catalyses tRNA(Ser) + L-serine + ATP = L-seryl-tRNA(Ser) + AMP + diphosphate + H(+). It carries out the reaction tRNA(Sec) + L-serine + ATP = L-seryl-tRNA(Sec) + AMP + diphosphate + H(+). It functions in the pathway aminoacyl-tRNA biosynthesis; selenocysteinyl-tRNA(Sec) biosynthesis; L-seryl-tRNA(Sec) from L-serine and tRNA(Sec): step 1/1. Its function is as follows. Catalyzes the attachment of serine to tRNA(Ser). Is also able to aminoacylate tRNA(Sec) with serine, to form the misacylated tRNA L-seryl-tRNA(Sec), which will be further converted into selenocysteinyl-tRNA(Sec). The chain is Serine--tRNA ligase from Helianthus annuus (Common sunflower).